The primary structure comprises 337 residues: Transcription factor HBI1 (337 aa).

A disordered region spans residues 119-180 (VALKNKRKPE…SKGASENQKL (62 aa)). Basic and acidic residues predominate over residues 126-151 (KPEVKTREEQKTEKKIKVEAETESSM). Residues 152–165 (KGKSNMGNTEASSD) show a composition bias toward polar residues. The region spanning 191–241 (QATDRHSLAERARREKISKKMKYLQDIVPGCNKVTGKAGMLDEIINYVQCL) is the bHLH domain.

As to quaternary structure, homodimer. Interacts with IBH1. Highly expressed in hypocotyls and cotyledons. Expressed in leaves, stems, and flowers.

It localises to the nucleus. Functionally, atypical bHLH transcription factor that acts as a positive regulator of cell elongation downstream of multiple external and endogenous signals by direct binding to the promoters and activation of the two expansin genes EXPA1 and EXPA8, encoding cell wall loosening enzymes. Transcriptional activity is inhibited when binding to the bHLH transcription factor IBH1. The sequence is that of Transcription factor HBI1 (HBI1) from Arabidopsis thaliana (Mouse-ear cress).